We begin with the raw amino-acid sequence, 846 residues long: MPKRKNSGQSTDLNSRSPKTIDEALRILAPPQALLVQSQLNLTAPANPFSIQKAPGTSSDNEQRAPKRRADEEAVNAVPKNLLTTSSTFARAVIPAAPAISSANNKMAPQSVTATAKTTTNRGKVSGEGEYQLIKNEVLCSPYGNQYEVLEFLGKGTFGQVVKAWKKGTSEIVAIKILKKHPSYARQGQIEVSILSRLSNENSEEFNFVRAFECFNHKSHTCLVFEMLEQNLYDFLKQNKFMPLPLNAIRPILFQVLTALLKLKSLGLIHADLKPENIMLVDPQQQPYRVKVIDFGSASHRSKAVTNTYLQSRYYRAPEIILGLPFNESIDMWSLGCVIAELFLGWPLYPGSSEYDQIRFIIQTQGLPPTSMLESASKLHRFFKEVKSESPNHTNVGGSYYRLKTVEEYEASSSTAKSKETRKYIFNVIDDISRVCYGFESDPVEHLCDRIDRQEFVDVLKKMLVLNPDFRITPAEGLESKFVTMTHINGYNFANYVHEAHKRMEICRKPGPAMATPYRAANVATPITPVEKPPAPKLQQPMIAVLPQLNQIAATNIPPVPTQPDLTNLMHHYSQMAAATGSAATAAQFFYQPLPPAPLFQYAQLHHPFAARPPHFLSLATPSHMVPQFVPVPIMDPSMLQGQWPPGAAQQFAVLANDIMRVPAPQGINQMFASTPQTFSLPQFLSSSIPSATTAFNGNAPNIPFPEENSSWALGTAAQQQQQQAQRAQSMINGNVKVKPLAAQPKKNSPAPSVITLSSDEDSNGAGSSNSGSTTRTGAVNPVRNDTLPMGNTIKTEDILVPPTTFDGQLPNLQYFPGSHLFDPKTVAGLLPNPFLDTSHIPRAFN.

The disordered stretch occupies residues Asn-47–Ala-74. Residues Asn-61–Glu-72 show a composition bias toward basic and acidic residues. In terms of domain architecture, Protein kinase spans Tyr-147–Val-483. Residues Leu-153–Val-161 and Lys-176 each bind ATP. Asp-272 functions as the Proton acceptor in the catalytic mechanism. The disordered stretch occupies residues Leu-741–Met-790. Residues Lys-746–Leu-757 are compositionally biased toward polar residues. Residues Asn-764–Ser-773 show a composition bias toward low complexity.

Belongs to the protein kinase superfamily. CMGC Ser/Thr protein kinase family. HIPK subfamily. As to expression, broadly expressed during embryogenesis. Expression becomes more restricted during larval development. L3 larvae display robust expression in many head and motor neurons, and lower levels of expression in the intestine and the seam cells of the hypodermis. By late L4 stage, expression is largely restricted to neurons and is maintained in nerve cells of the head and nerve cord during adulthood. Expressed in adult pharyngeal cells, hypodermal cells, gonadal sheath cells and distal tip cells but not in germline cells. Expressed in serotonergic neurons such as ADF and NSM and in GABAergic neurons, including RME, RIS and DVB.

The protein resides in the nucleus. It catalyses the reaction L-seryl-[protein] + ATP = O-phospho-L-seryl-[protein] + ADP + H(+). The catalysed reaction is L-threonyl-[protein] + ATP = O-phospho-L-threonyl-[protein] + ADP + H(+). Functionally, serine/threonine-protein kinase required in the somatic gonadal cells to regulate germline proliferation during larval development and in adulthood. Plays a role in the development/differentiation of gonadal distal tip cells. Required for normal lifespan in a pha-4 and mxl-2-dependent manner. Also contributes to survival following heat or oxidative stress. Prevents sumoylation and inactivation of heat shock transcription factor hsf-1 which enhances hsf-1-dependent transcriptional induction of chaperones in response to heat shock. Also required for hormetic extension of longevity in response to heat stress. Also contributes to longevity by promoting autophagy under nutrient stress conditions through induction of autophagosome formation and autophagy gene expression. Provides protection against proteotoxic polyglutamine aggregate and the associated locomotory toxicity, probably as a result of kinase activity. Contributes to longevity via gamma-aminobutyric acid (GABA)ergic signaling by promoting autophagy through mxl-2, hlh-30 and daf-16 but independent of hsf-1 and phas-4, to induce autophagosome formation and the expression of autophagy genes. Promotes thermotolerance via serotonergic signaling by serotonergic neurons. Preserves neuronal function in aging animals by mitigating against age-associated decline in axonal and synaptic transmissions. Acts as an activator of nhr-49-dependent hypoxia response, including the up-regulation of fmo-2 and acs-2, the induction of autophagosome formation and expression of autophagy genes. This is Homeodomain-interacting protein kinase 1 from Caenorhabditis elegans.